A 210-amino-acid chain; its full sequence is Probable membrane protein Rv1733c (210 aa).

A run of 2 helical transmembrane segments spans residues 43-63 and 165-185; these read AVVM…AAAA and ALAA…LLAL.

It localises to the cell membrane. This is Probable membrane protein Rv1733c from Mycobacterium tuberculosis (strain ATCC 25618 / H37Rv).